Reading from the N-terminus, the 157-residue chain is Ribosome maturation factor RimP (157 aa).

The protein belongs to the RimP family.

It localises to the cytoplasm. Functionally, required for maturation of 30S ribosomal subunits. This Bacillus pumilus (strain SAFR-032) protein is Ribosome maturation factor RimP.